Reading from the N-terminus, the 180-residue chain is ATP synthase subunit delta, chloroplastic (180 aa).

This sequence belongs to the ATPase delta chain family. In terms of assembly, F-type ATPases have 2 components, F(1) - the catalytic core - and F(0) - the membrane proton channel. F(1) has five subunits: alpha(3), beta(3), gamma(1), delta(1), epsilon(1). CF(0) has four main subunits: a(1), b(1), b'(1) and c(10-14). The alpha and beta chains form an alternating ring which encloses part of the gamma chain. F(1) is attached to F(0) by a central stalk formed by the gamma and epsilon chains, while a peripheral stalk is formed by the delta, b and b' chains.

The protein localises to the plastid. The protein resides in the chloroplast thylakoid membrane. In terms of biological role, f(1)F(0) ATP synthase produces ATP from ADP in the presence of a proton or sodium gradient. F-type ATPases consist of two structural domains, F(1) containing the extramembraneous catalytic core and F(0) containing the membrane proton channel, linked together by a central stalk and a peripheral stalk. During catalysis, ATP synthesis in the catalytic domain of F(1) is coupled via a rotary mechanism of the central stalk subunits to proton translocation. Functionally, this protein is part of the stalk that links CF(0) to CF(1). It either transmits conformational changes from CF(0) to CF(1) or is implicated in proton conduction. The polypeptide is ATP synthase subunit delta, chloroplastic (Rhodomonas salina (Cryptomonas salina)).